The chain runs to 101 residues: Protein S100-A7-like 2 (101 aa).

2 EF-hand domains span residues 13–48 (IVAM…SGCE) and 50–85 (SDMD…ITID). Asp63, Asn65, Asp67, Lys69, and Glu74 together coordinate Ca(2+). Residues His87 and His91 each coordinate Zn(2+).

Belongs to the S-100 family.

This is Protein S100-A7-like 2 (S100A7L2) from Homo sapiens (Human).